The primary structure comprises 576 residues: Low-affinity glucose transporter HXT4 (576 aa).

The interval 1 to 56 is disordered; the sequence is MSEEAAYQEDTAVQNTPADALSPVESDSNSALSTPSNKAERDDMKDFDENHEESNN. Topologically, residues 1 to 66 are cytoplasmic; sequence MSEEAAYQED…YVEIPKKPAS (66 aa). Over residues 25–37 the composition is skewed to polar residues; that stretch reads ESDSNSALSTPSN. The span at 38 to 54 shows a compositional bias: basic and acidic residues; sequence KAERDDMKDFDENHEES. A Glycyl lysine isopeptide (Lys-Gly) (interchain with G-Cter in ubiquitin) cross-link involves residue K45. Residues 67–87 form a helical membrane-spanning segment; it reads AYVTVSICCLMVAFGGFVFGW. The Extracellular portion of the chain corresponds to 88-122; sequence DTGTISGFVAQTDFIRRFGMKHHDGTYYLSKVRTG. A helical membrane pass occupies residues 123 to 143; sequence LIVSIFNIGCAIGGIILARLG. At 144–149 the chain is on the cytoplasmic side; it reads DMYGRK. The helical transmembrane segment at 150 to 170 threads the bilayer; the sequence is MGLIVVVVIYIIGIIIQIASI. At 171-180 the chain is on the extracellular side; it reads NKWYQYFIGR. The helical transmembrane segment at 181-201 threads the bilayer; that stretch reads IISGLGVGGIAVLSPMLISEV. At 202–207 the chain is on the cytoplasmic side; that stretch reads SPKHIR. Residues 208 to 228 form a helical membrane-spanning segment; the sequence is GTLVSCYQLMITLGIFLGYCT. At 229–242 the chain is on the extracellular side; the sequence is NYGTKTYTNSVQWR. Residues 243 to 263 traverse the membrane as a helical segment; the sequence is VPLGLGFAWALFMIGGMTFVP. The Cytoplasmic portion of the chain corresponds to 264 to 346; that stretch reads ESPRYLVEVG…IQSLQQLTGD (83 aa). A helical transmembrane segment spans residues 347–363; that stretch reads NYFFYYGTTVFTAVGLE. The Extracellular segment spans residues 364–369; the sequence is DSFETS. The chain crosses the membrane as a helical span at residues 370 to 387; it reads IVLGIVNFASTFVGIFLV. Topologically, residues 388 to 394 are cytoplasmic; that stretch reads ERYGRRR. The chain crosses the membrane as a helical span at residues 395 to 415; it reads CLLWGAASMTACMVVFASVGV. The Extracellular segment spans residues 416–437; it reads TRLWPNGKKNGSSKGAGNCMIV. N425 carries N-linked (GlcNAc...) asparagine glycosylation. The chain crosses the membrane as a helical span at residues 438–458; that stretch reads FTCFYLFCFATTWAPIPFVVN. At 459–475 the chain is on the cytoplasmic side; that stretch reads SETFPLRVKSKCMAIAQ. The helical transmembrane segment at 476–496 threads the bilayer; that stretch reads ACNWIWGFLIGFFTPFISGAI. D497 is a topological domain (extracellular). The chain crosses the membrane as a helical span at residues 498–518; it reads FYYGYVFMGCLVFSYFYVFFF. The Cytoplasmic segment spans residues 519-576; that stretch reads VPETKGLTLEEVNTLWEEGVLPWKSPSWVPPNKRGTDYNADDLMHDDQPFYKKMFGKK.

Belongs to the major facilitator superfamily. Sugar transporter (TC 2.A.1.1) family.

The protein localises to the cell membrane. Its activity is regulated as follows. Xylose uptake is strongly inhibited by glucose. Functionally, low-affinity glucose transporter. Can also transport xylose. The chain is Low-affinity glucose transporter HXT4 (HXT4) from Saccharomyces cerevisiae (strain YJM789) (Baker's yeast).